The chain runs to 501 residues: COP9 signalosome complex subunit 3 (501 aa).

Residues 275–445 enclose the PCI domain; sequence RFEDALFLLE…VFWTELSPVP (171 aa).

It belongs to the CSN3 family. In terms of assembly, component of the CSN complex, probably composed of csn-1, csn-2, csn-3, csn-4, csn-5, csn-6 and csn-7. Within the complex it probably interacts directly with csn-2 and csn-4. May interact with itself.

The protein resides in the cytoplasm. Its subcellular location is the nucleus. In terms of biological role, component of the COP9 signalosome complex (CSN), a complex involved in various cellular and developmental processes. The CSN complex is an essential regulator of the ubiquitin (Ubl) conjugation pathway by mediating the deneddylation of the cullin subunits of the SCF-type E3 ligase complexes, leading to decrease the Ubl ligase activity of SCF. The CSN complex plays an essential role in embryogenesis and oogenesis and is required to regulate microtubule stability in the early embryo. Mediates mei-3/katanin targeting for degradation at the meiosis to mitosis transition via deneddylation of cul-3. The sequence is that of COP9 signalosome complex subunit 3 (csn-3) from Caenorhabditis elegans.